The following is a 324-amino-acid chain: uncharacterized protein (324 aa).

Helical transmembrane passes span 34–54, 76–96, 103–123, 127–147, 158–178, 198–218, 243–263, 275–295, and 297–317; these read MAVL…FYVL, VFMA…NVGL, IYQM…TTLL, IGQL…IVGY, PILG…QFTI, GTYG…FIGS, YVIS…GLAI, LDIA…MESF, and LLQF…HSII.

It localises to the membrane. This is an uncharacterized protein from Schizosaccharomyces pombe (strain 972 / ATCC 24843) (Fission yeast).